The sequence spans 912 residues: Metabotropic glutamate receptor 4 (912 aa).

The first 32 residues, 1-32, serve as a signal peptide directing secretion; sequence MPGKSGLGWWWARLPLCLLLSLYGPWMPSSLG. The Extracellular portion of the chain corresponds to 33–586; sequence KPKGHPHMNS…PIIKLEWDSP (554 aa). Cys-67 and Cys-109 are disulfide-bonded. Asn-98 is a glycosylation site (N-linked (GlcNAc...) asparagine). L-glutamate is bound by residues Ser-159, 180-182, and Tyr-230; that span reads AST. Intrachain disulfides connect Cys-249-Cys-538, Cys-372-Cys-388, Cys-428-Cys-435, Cys-520-Cys-539, Cys-524-Cys-542, Cys-545-Cys-557, and Cys-560-Cys-573. Residue Asn-301 is glycosylated (N-linked (GlcNAc...) asparagine). Residue Asp-312 participates in L-glutamate binding. Lys-405 is a binding site for L-glutamate. Asn-454 and Asn-484 each carry an N-linked (GlcNAc...) asparagine glycan. The N-linked (GlcNAc...) asparagine glycan is linked to Asn-569. Residues 587-607 traverse the membrane as a helical segment; it reads WAVLPLFLAVVGIAATLFVVI. Topologically, residues 608–624 are cytoplasmic; the sequence is TFVRYNDTPIVKASGRE. The helical transmembrane segment at 625–645 threads the bilayer; that stretch reads LSYVLLAGIFLCYATTFLMIA. Residues 646–653 are Extracellular-facing; sequence EPDLGTCS. The helical transmembrane segment at 654-671 threads the bilayer; the sequence is LRRIFLGLGMSISYAALL. Topologically, residues 672 to 699 are cytoplasmic; it reads TKTNRIYRIFEQGKRSVSAPRFISPASQ. Residues 700 to 720 form a helical membrane-spanning segment; sequence LAITFSLISLQLLGICVWFVV. Topologically, residues 721–751 are extracellular; the sequence is DPSHSVVDFQDQRTLDPRFARGVLKCDISDL. A helical transmembrane segment spans residues 752–772; sequence SLICLLGYSMLLMVTCTVYAI. Residues 773-786 are Cytoplasmic-facing; it reads KTRGVPETFNEAKP. Residues 787 to 807 traverse the membrane as a helical segment; the sequence is IGFTMYTTCIVWLAFIPIFFG. At 808 to 826 the chain is on the extracellular side; sequence TSQSADKLYIQTTTLTVSV. Residues 827 to 847 traverse the membrane as a helical segment; it reads SLSASVSLGMLYMPKVYIILF. At 848–912 the chain is on the cytoplasmic side; sequence HPEQNVPKRK…TYVTYTNHAI (65 aa).

It belongs to the G-protein coupled receptor 3 family. As to quaternary structure, interacts with PICK1.

Its subcellular location is the cell membrane. In terms of biological role, G-protein coupled receptor for glutamate. Ligand binding causes a conformation change that triggers signaling via guanine nucleotide-binding proteins (G proteins) and modulates the activity of down-stream effectors. Signaling inhibits adenylate cyclase activity. The polypeptide is Metabotropic glutamate receptor 4 (GRM4) (Macaca fascicularis (Crab-eating macaque)).